A 134-amino-acid polypeptide reads, in one-letter code: Large-conductance mechanosensitive channel (134 aa).

Transmembrane regions (helical) follow at residues 16–36 and 81–101; these read VIDLAVGVVIGAAFGKIVTAL and GDFINTLIQFVIVAFAIFIVV.

Belongs to the MscL family. As to quaternary structure, homopentamer.

The protein resides in the cell inner membrane. Channel that opens in response to stretch forces in the membrane lipid bilayer. May participate in the regulation of osmotic pressure changes within the cell. This is Large-conductance mechanosensitive channel from Stenotrophomonas maltophilia (strain K279a).